The sequence spans 146 residues: Cytochrome c oxidase assembly factor 1 homolog (146 aa).

Topologically, residues 1–14 are mitochondrial matrix; sequence MMWQKYAGSRRSMP. The chain crosses the membrane as a helical span at residues 15–37; sequence LGARILFHGVFYAGGFAIVYYLI. The Mitochondrial intermembrane segment spans residues 38–146; it reads QKFHSRALYY…GENGDEVKKE (109 aa).

The protein belongs to the COA1 family. Component of the MITRAC (mitochondrial translation regulation assembly intermediate of cytochrome c oxidase complex) complex, the core components of this complex being COA3/MITRAC12 and COX14. Interacts with COX17 and COA6. Part of the mitochondrial complex I assembly/MCIA complex that comprises at least the core subunits TMEM126B, NDUFAF1, ECSIT and ACAD9 and complement subunits such as COA1 and TMEM186.

It is found in the mitochondrion inner membrane. Component of the MITRAC (mitochondrial translation regulation assembly intermediate of cytochrome c oxidase complex) complex, that regulates cytochrome c oxidase assembly. MITRAC complexes regulate both translation of mitochondrial encoded components and assembly of nuclear-encoded components imported in mitochondrion. Required for assembly of mitochondrial respiratory chain complex I and complex IV. As part of the MCIA complex, required for efficient assembly of the mitochondrial complex I. The chain is Cytochrome c oxidase assembly factor 1 homolog from Homo sapiens (Human).